We begin with the raw amino-acid sequence, 339 residues long: Longiborneol synthase CLM1 (339 aa).

Positions 1–17 (MLATPTLSNFDKPSLPS) are enriched in polar residues. Positions 1–21 (MLATPTLSNFDKPSLPSSEGG) are disordered. Positions 112, 241, 245, and 249 each coordinate Mg(2+). The NDXXSXXXE magnesium-binding motif signature appears at 241–249 (NDVLSFYKE).

The protein belongs to the trichodiene synthase family. Requires Mg(2+) as cofactor. Mn(2+) serves as cofactor.

It carries out the reaction (2E,6E)-farnesyl diphosphate + H2O = (-)-longiborneol + diphosphate. It functions in the pathway mycotoxin biosynthesis. Terpene cyclase involved in the biosynthesis of culmorin, a tricyclic sesquiterpene diol reported to have antifungal activity and some phytotoxicity to wheat coleoptile tissue, contributing to Fusarium head blight disease. The terpene cyclase CLM1 is responsible for the cyclization of farnesyl diphosphate into the intermediate longiborneol. Longiborneol is then hydroxylated in a regio- and endo-stereoselective manner at position C-11 by the cytochrome P450 monooxygenase CLM2 to produce culmorin. Additional non-specific oxygenases are also able to hydroxylate longiborneol at other sites than C-11 leading to 3-hydroxylongiborneol, 5-hydroxylongiborneol, 12-hydroxylongiborneol and 15-hydroxylongiborneol. Moreover, another oxygenase capable of installing a C-11 exo-hydroxy group in longiborneol can also yield 11-epi-acetylculmorin. The production of these longiborneol derivatives is dwarfed by the high abundance of culmorin, suggesting that CLM2 displays superior enzymatic activity to the unidentified, possibly promiscuous, additional oxygenases. This is Longiborneol synthase CLM1 from Gibberella zeae (strain ATCC MYA-4620 / CBS 123657 / FGSC 9075 / NRRL 31084 / PH-1) (Wheat head blight fungus).